The following is a 196-amino-acid chain: Small ribosomal subunit protein uS4c (196 aa).

A disordered region spans residues 15–41 (LGALPGLTSKRPRSGSDLKNPLRSGKR). The region spanning 89–150 (MRLDNILFRL…KQRSKALIQN (62 aa)) is the S4 RNA-binding domain.

The protein belongs to the universal ribosomal protein uS4 family. In terms of assembly, part of the 30S ribosomal subunit. Contacts protein S5. The interaction surface between S4 and S5 is involved in control of translational fidelity.

Its subcellular location is the plastid. The protein resides in the chloroplast. Functionally, one of the primary rRNA binding proteins, it binds directly to 16S rRNA where it nucleates assembly of the body of the 30S subunit. In terms of biological role, with S5 and S12 plays an important role in translational accuracy. This chain is Small ribosomal subunit protein uS4c (rps4), found in Narcissus odorus (Campernelle jonquil).